A 405-amino-acid polypeptide reads, in one-letter code: uncharacterized protein (405 aa).

The next 12 helical transmembrane spans lie at 32–52 (MFVL…VLAG), 53–73 (WLTF…GVLL), 84–104 (IDMI…WLGW), 108–128 (PVVC…IAGI), 150–170 (AVYS…VGWL), 171–191 (GPEA…VCLS), 237–257 (WGAL…VAAG), 260–280 (VVGL…LLAG), 291–311 (IMTA…AEFG), 314–334 (GLTI…VAML), 352–372 (ISIS…GVVI), and 378–398 (AIFV…LSIP).

The protein belongs to the major facilitator superfamily.

The protein localises to the cell membrane. This is an uncharacterized protein from Sinorhizobium fredii (strain NBRC 101917 / NGR234).